A 196-amino-acid polypeptide reads, in one-letter code: Imidazole glycerol phosphate synthase subunit HisH (196 aa).

A Glutamine amidotransferase type-1 domain is found at 2 to 196 (NVVILDTGCA…AQLLKNFLEM (195 aa)). Cys-77 serves as the catalytic Nucleophile. Active-site residues include His-178 and Glu-180.

Heterodimer of HisH and HisF.

The protein localises to the cytoplasm. The enzyme catalyses 5-[(5-phospho-1-deoxy-D-ribulos-1-ylimino)methylamino]-1-(5-phospho-beta-D-ribosyl)imidazole-4-carboxamide + L-glutamine = D-erythro-1-(imidazol-4-yl)glycerol 3-phosphate + 5-amino-1-(5-phospho-beta-D-ribosyl)imidazole-4-carboxamide + L-glutamate + H(+). It carries out the reaction L-glutamine + H2O = L-glutamate + NH4(+). The protein operates within amino-acid biosynthesis; L-histidine biosynthesis; L-histidine from 5-phospho-alpha-D-ribose 1-diphosphate: step 5/9. Its function is as follows. IGPS catalyzes the conversion of PRFAR and glutamine to IGP, AICAR and glutamate. The HisH subunit catalyzes the hydrolysis of glutamine to glutamate and ammonia as part of the synthesis of IGP and AICAR. The resulting ammonia molecule is channeled to the active site of HisF. This Salmonella choleraesuis (strain SC-B67) protein is Imidazole glycerol phosphate synthase subunit HisH.